The primary structure comprises 94 residues: Pyrimidine/purine nucleoside phosphorylase (94 aa).

It belongs to the nucleoside phosphorylase PpnP family.

It carries out the reaction a purine D-ribonucleoside + phosphate = a purine nucleobase + alpha-D-ribose 1-phosphate. It catalyses the reaction adenosine + phosphate = alpha-D-ribose 1-phosphate + adenine. The enzyme catalyses cytidine + phosphate = cytosine + alpha-D-ribose 1-phosphate. The catalysed reaction is guanosine + phosphate = alpha-D-ribose 1-phosphate + guanine. It carries out the reaction inosine + phosphate = alpha-D-ribose 1-phosphate + hypoxanthine. It catalyses the reaction thymidine + phosphate = 2-deoxy-alpha-D-ribose 1-phosphate + thymine. The enzyme catalyses uridine + phosphate = alpha-D-ribose 1-phosphate + uracil. The catalysed reaction is xanthosine + phosphate = alpha-D-ribose 1-phosphate + xanthine. Functionally, catalyzes the phosphorolysis of diverse nucleosides, yielding D-ribose 1-phosphate and the respective free bases. Can use uridine, adenosine, guanosine, cytidine, thymidine, inosine and xanthosine as substrates. Also catalyzes the reverse reactions. This Psychromonas ingrahamii (strain DSM 17664 / CCUG 51855 / 37) protein is Pyrimidine/purine nucleoside phosphorylase.